We begin with the raw amino-acid sequence, 129 residues long: Small ribosomal subunit protein uS11 (129 aa).

The protein belongs to the universal ribosomal protein uS11 family. As to quaternary structure, part of the 30S ribosomal subunit. Interacts with proteins S7 and S18. Binds to IF-3.

Its function is as follows. Located on the platform of the 30S subunit, it bridges several disparate RNA helices of the 16S rRNA. Forms part of the Shine-Dalgarno cleft in the 70S ribosome. This Synechococcus sp. (strain RCC307) protein is Small ribosomal subunit protein uS11.